The chain runs to 574 residues: Probable cytochrome c oxidase subunit 1 (574 aa).

Residues 40–60 (IGIMYCVACFIFFFVGGLLAL) form a helical membrane-spanning segment. His-86 is a binding site for Fe(II)-heme a. The next 6 helical transmembrane spans lie at 89–109 (IMLL…VLPL), 121–141 (LNAF…AGFI), 170–190 (LWIM…VNMI), 213–233 (ILVT…ALFG), 258–278 (LFWF…FGIV), and 290–310 (IFGY…SVAV). The Cu cation site is built by His-264 and Tyr-268. Positions 264 to 268 (HPEVY) form a cross-link, 1'-histidyl-3'-tyrosine (His-Tyr). Residues His-313 and His-314 each contribute to the Cu cation site. The next 2 helical transmembrane spans lie at 315-335 (MFAT…LIAV) and 359-379 (MLFS…GVLL). Residue His-397 coordinates heme a3. The next 3 helical transmembrane spans lie at 398–418 (FHYV…YFWF), 433–453 (LHFW…HWLG), and 476–496 (VSTI…WNVF). Residue His-399 coordinates Fe(II)-heme a.

This sequence belongs to the heme-copper respiratory oxidase family. In terms of assembly, associates with subunits II, III and IV to form cytochrome c oxidase. Cu(2+) serves as cofactor. Heme is required as a cofactor.

It localises to the cell membrane. It carries out the reaction 4 Fe(II)-[cytochrome c] + O2 + 8 H(+)(in) = 4 Fe(III)-[cytochrome c] + 2 H2O + 4 H(+)(out). It participates in energy metabolism; oxidative phosphorylation. Functionally, cytochrome c oxidase is the component of the respiratory chain that catalyzes the reduction of oxygen to water. Subunits 1-3 form the functional core of the enzyme complex. CO I is the catalytic subunit of the enzyme. Electrons originating in cytochrome c are transferred via the copper A center of subunit 2 and heme A of subunit 1 to the bimetallic center formed by heme A3 and copper B. This Mycobacterium leprae (strain TN) protein is Probable cytochrome c oxidase subunit 1 (ctaD).